A 37-amino-acid chain; its full sequence is uncharacterized protein (37 aa).

This is an uncharacterized protein from Archaeoglobus fulgidus (strain ATCC 49558 / DSM 4304 / JCM 9628 / NBRC 100126 / VC-16).